We begin with the raw amino-acid sequence, 213 residues long: Putative 3-methyladenine DNA glycosylase (213 aa).

This sequence belongs to the DNA glycosylase MPG family.

In Paraburkholderia phytofirmans (strain DSM 17436 / LMG 22146 / PsJN) (Burkholderia phytofirmans), this protein is Putative 3-methyladenine DNA glycosylase.